Here is a 294-residue protein sequence, read N- to C-terminus: Diaminopimelate epimerase (294 aa).

Substrate is bound by residues Asn-11 and Asn-78. Cys-87 functions as the Proton donor in the catalytic mechanism. Substrate contacts are provided by residues 88–89 (GN), Asn-167, Asn-203, and 221–222 (ER). Residue Cys-230 is the Proton acceptor of the active site. Position 231-232 (231-232 (GT)) interacts with substrate.

The protein belongs to the diaminopimelate epimerase family. In terms of assembly, homodimer.

It localises to the cytoplasm. It carries out the reaction (2S,6S)-2,6-diaminopimelate = meso-2,6-diaminopimelate. It participates in amino-acid biosynthesis; L-lysine biosynthesis via DAP pathway; DL-2,6-diaminopimelate from LL-2,6-diaminopimelate: step 1/1. In terms of biological role, catalyzes the stereoinversion of LL-2,6-diaminopimelate (L,L-DAP) to meso-diaminopimelate (meso-DAP), a precursor of L-lysine and an essential component of the bacterial peptidoglycan. This Mycolicibacterium paratuberculosis (strain ATCC BAA-968 / K-10) (Mycobacterium paratuberculosis) protein is Diaminopimelate epimerase.